The following is a 196-amino-acid chain: ECF RNA polymerase sigma factor SigM (196 aa).

The segment at 39–105 (LFRRHHRQLH…ACLDRLRRAK (67 aa)) is sigma-70 factor domain-2. The Interaction with polymerase core subunit RpoC motif lies at 63–66 (DALQ). The sigma-70 factor domain-4 stretch occupies residues 130–181 (AVQRALMRLPVEQRAAVVAVDMQGYSIADTARMLGVAEGTVKSRCARARARL). Positions 156–175 (IADTARMLGVAEGTVKSRCA) form a DNA-binding region, H-T-H motif.

This sequence belongs to the sigma-70 factor family. ECF subfamily. As to quaternary structure, interacts transiently with the RNA polymerase catalytic core formed by RpoA, RpoB, RpoC and RpoZ (2 alpha, 1 beta, 1 beta' and 1 omega subunit) to form the RNA polymerase holoenzyme that can initiate transcription. Interacts (via sigma-70 factor domain 4) with anti-sigma-M factor RsmA.

Functionally, sigma factors are initiation factors that promote the attachment of RNA polymerase to specific initiation sites and are then released. Extracytoplasmic function (ECF) sigma factors are held in an inactive form by an anti-sigma factor until released by regulated intramembrane proteolysis. In Mycobacterium tuberculosis (strain ATCC 35801 / TMC 107 / Erdman), this protein is ECF RNA polymerase sigma factor SigM (sigM).